Here is a 92-residue protein sequence, read N- to C-terminus: Secreted RxLR effector protein RXLR-C02 (92 aa).

Positions 1–21 (MQFHLLVMTTIAASFAATGSA) are cleaved as a signal peptide. The RxLR signature appears at 48–51 (RALR). The segment at 54 to 75 (ENRGLIGDDSDSSISDSDSEAK) is disordered.

It belongs to the RxLR effector family.

It localises to the secreted. Its subcellular location is the host cytoplasm. The protein localises to the host nucleus. In terms of biological role, secreted effector that suppresses pattern-triggered immunity (PTI) in plant host. The protein is Secreted RxLR effector protein RXLR-C02 of Plasmopara halstedii (Downy mildew of sunflower).